The primary structure comprises 276 residues: NADH-cytochrome b5 reductase 2 (276 aa).

Positions 15 to 127 constitute an FAD-binding FR-type domain; it reads EAKYPLPLIE…RGPTGRLFYN (113 aa). Lysine 17 bears the N6-acetyllysine mark. Tyrosine 18 is modified (phosphotyrosine). Residues 107 to 137 and 146 to 181 contribute to the FAD site; these read ENMKIGDTILFRGPTGRLFYNEPGTLLIKTD and LVHHLGMIAGGTGITPMLQLIRHITKDTSDGTRMSL.

It belongs to the flavoprotein pyridine nucleotide cytochrome reductase family. FAD is required as a cofactor.

The catalysed reaction is 2 Fe(III)-[cytochrome b5] + NADH = 2 Fe(II)-[cytochrome b5] + NAD(+) + H(+). NADH-cytochrome b5 reductases are involved in desaturation and elongation of fatty acids, cholesterol biosynthesis, drug metabolism, and, in erythrocyte, methemoglobin reduction. Responsible for NADH-dependent lucigenin chemiluminescence in spermatozoa by reducing both lucigenin and 2-[4-iodophenyl]-3-[4-nitrophenyl]-5-[2,4-disulfophenyl]-2H tetrazolium monosodium salt (WST-1). This is NADH-cytochrome b5 reductase 2 (Cyb5r2) from Rattus norvegicus (Rat).